Reading from the N-terminus, the 552-residue chain is DnaJ homolog subfamily C member 1 (552 aa).

The N-terminal stretch at 1-43 (MWVPGFGSARLPQRRRSGLESSSVRPLWLLLLFLLAAVRPVRA) is a signal peptide. Residues 44 to 149 (WESGDLELFD…RRVRKMSNAE (106 aa)) are Lumenal-facing. The J domain occupies 56-129 (EEVQLNFYEF…RYDDVLINGL (74 aa)). A helical transmembrane segment spans residues 150 to 170 (LALLLFIILTVGHYAVVWSIY). Over 171 to 552 (LEKQLDELLG…LVQKKKQAKS (382 aa)) the chain is Cytoplasmic. The region spanning 323-377 (RQAPEWTEEDLSQLTRSMVKFPGGTPGRWDKIAHELGRSVTDVTTKAKELKDSVT) is the SANT 1 domain. The tract at residues 370–495 (KELKDSVTSS…ERTRAAEEAW (126 aa)) is disordered. Ser379 carries the phosphoserine modification. Over residues 419–431 (MEDEEHEAAEGEQ) the composition is skewed to acidic residues. The span at 453 to 470 (TRVEPEEKLRGKRQKDFD) shows a compositional bias: basic and acidic residues. A phosphoserine mark is found at Ser477 and Ser478. The segment covering 480–492 (EEKQRKERTRAAE) has biased composition (basic and acidic residues). An SANT 2 domain is found at 490 to 545 (AAEEAWTQSQQKLLELALQQYPKGASDRWDKIAKCVPSKSKEDCIARYKLLVELVQ).

As to quaternary structure, interacts (via J domain) with HSPA5. Interacts (via cytosolic domain) with ribosomes. Interacts (via SANT 2 domain) with SERPINA3; the interaction delays the formation of the covalent inhibitory complex SERPINA3-chymotrypsin, but does not alter the catalytic activity of SERPINA3. Interacts (via SANT 2 domain) with ITIH4 (via C-terminus); the interaction protects ITIH4 against in vitro cleavage by kallikrein. In terms of tissue distribution, widely expressed.

It localises to the endoplasmic reticulum membrane. Its subcellular location is the nucleus membrane. The protein localises to the microsome membrane. In terms of biological role, may modulate protein synthesis. This is DnaJ homolog subfamily C member 1 (Dnajc1) from Mus musculus (Mouse).